The primary structure comprises 975 residues: GPI inositol-deacylase (975 aa).

Residues 27–47 (STLVIIVGLLLLCIITSTHIS) traverse the membrane as a helical segment. The N-linked (GlcNAc...) asparagine glycan is linked to Asn49. Ser210 is a catalytic residue. Residues Asn276, Asn384, Asn407, Asn419, and Asn488 are each glycosylated (N-linked (GlcNAc...) asparagine). The helical transmembrane segment at 655–675 (LAFASIPISIIALVLCYQFYY) threads the bilayer. The N-linked (GlcNAc...) asparagine glycan is linked to Asn696. 3 helical membrane-spanning segments follow: residues 699–719 (LLIFLFLSVGPIAINHKAILT), 751–771 (FVWWIGPVFFIISVALLFIIL), and 818–838 (VCFISLGVMVYVPYQFAFILV). N-linked (GlcNAc...) asparagine glycosylation occurs at Asn867. Helical transmembrane passes span 868 to 888 (VSFLMLTIFMIPINAPIVVVF), 932 to 952 (NWLIVVSILGYLSFYSFMYGI), and 955 to 975 (LYWVYHISNILNGVLFFLTIL).

Belongs to the GPI inositol-deacylase family.

The protein localises to the endoplasmic reticulum membrane. Involved in inositol deacylation of GPI-anchored proteins which plays important roles in the quality control and ER-associated degradation of GPI-anchored proteins. This chain is GPI inositol-deacylase (BST1), found in Kluyveromyces lactis (strain ATCC 8585 / CBS 2359 / DSM 70799 / NBRC 1267 / NRRL Y-1140 / WM37) (Yeast).